The following is a 1622-amino-acid chain: MEAEVWEAEGYNLVLDSDLYDADGYDVPDPGLLTEKNELTFTEPSQVLPFLTSSQQWQSLTPRARARRLWLLLRTSLHEVVEKEKRAELRAARLTHGLEPLRRLEVAAGLRSVAQDPVGGRFVVLDGAGRLHLHKEDGWAQETLLAPVRLTGLVTVLGPLGAVGRFVGWGPAGLAILRPNLSLLWLSEQGVGRAPGWAPTCCLPVPDLRLLLVAEMNSSLALWQFRSGGRRLVLRGSALHPPPSPTGRLMRLAVAPVPPHHVLRCFAAYGSAVLTFDLHAWTLVDVRRDLHKTTISDLAYCEEVEAMVTASRDSTVKVWEADWQIRMVFVGHTGPVTAMTVLPNTTLVLSASQDGTLRTWDLQAAAQVGEVALGFWGQDKLSRRVGRLLAPVRPGWPVLSLCASSMQLWRVRELYSPLAQLPAKVLHVQVAPALPAPAHQSLPTRLVCACADGSVYLLSAATGRIVSSLLLEPEDCAAAVAYCLPREALWLLTRAGHLVRANAARCPMSVLHRVCPPPPPAPQPCCLHLYSHLTDLEGAFSSWEIVRQHWGELRCSSVACAWKNKNRYLPVVGHTDGTLSVLEWLSSKTVFQTEAHSPGPVVAIASTWNSIVSSGGDLTVKMWRVFPYAEESLSLLRTFSCCYPAVALCALGRRVTAGFEDPDSATYGLVQFGLGDSPRLDHRPQDDPTDHITGLCCCPTLKLYACSSLDCTVRIWTAENRLLRLLQLNGAPQALAFCSNSGDLVLALGSRLCLVSHRLYLPTSYLVKKMCRKAPDVVDDPPLPLMSQESLTSAQLQRLTNLHGAASLSEALSLIHRRRATSQHLVPKEDLDAIVARDRDLQQLRLGLVVPAAQPPPSWQQRQEGFDNYLRLIYGSGLLGMQSGRGSQQWSAGTLRVERETRDVCAVPQAAHCLARAEVSTAAQTVPTALSPQDLGALGQHFSQSPRVTVPIPPTHRRVHSKASQLLARSSLSHYLGISLDLQLQLEQLRGRTTMALDLPSSHLQCRIPLLPKRWDKEPLSSLRGFFPATVQPHKHCLRPICFPGYVPNSAVLQQMWLNAEPGASQDALWLWRPRPSQTQWQRKLLQWMGEKPGEEGEEDKKEEEEEKEDEELDWALASLSPHSNQQLDSWELEDQSAVDWTQEPRRRSCKVARTHPHPWHRHGSLLLDEHYGHLPKFLHFFIYQTWFKKLFPIFSLQAYPEAGTIEGLASLLVALLEKTTWVDRVHILQVLLRLLPNMSSDLQGQLQGLLVHLLNLDQPPSLQDQTQKKFVILALQLLLACSLESRDVVLELMSYFLYSPVHCRPELKKLLHGLGLQDPEGFLFKEMMTWVQGPDLDSKAGLRTCCHQKLEDMIQELQETPSQTSVVSGAPTRASVIPSGTSWSASGIFGRLSQVSEVPLMVVSPAEPHSLAPELQAQRMLAPKRSWGTPQLRLRVLSETLKSFCLEPEARLHPAGPAQLPGEPPPLEETDWSHSQLLDLGPIDALNFFCEQLRAQQRSSLQEKAAHPHPPEPYTVAPVPDMVVPPPREHWYHPILRLQEAKPQRSARSAMRLRGPMRSRLCAGRTLDGPIRTLKLPLPRVEPQPFPLDWPMPPRPLPPRLLQPALQRYFLPADADPDTYS.

WD repeat units follow at residues 187–233, 290–329, 331–370, 552–592, 594–633, and 687–726; these read SEQG…RRLV, LHKT…RMVF, GHTG…QVGE, ELRC…TVFQ, EAHS…EESL, and DPTD…LRLL. 2 disordered regions span residues 1090 to 1112 and 1453 to 1472; these read GEKP…EDEE and LHPA…EETD. The stretch at 1094 to 1118 forms a coiled coil; that stretch reads GEEGEEDKKEEEEEKEDEELDWALA. Residues 1096 to 1112 are compositionally biased toward acidic residues; sequence EGEEDKKEEEEEKEDEE.

This is WD repeat-containing protein 97 from Homo sapiens (Human).